A 395-amino-acid chain; its full sequence is Chorismate synthase (395 aa).

NADP(+) contacts are provided by Arg40 and Arg46. Residues 134-136 (RAS), 256-257 (QA), Gly301, 316-320 (KPIST), and Arg342 each bind FMN.

Belongs to the chorismate synthase family. In terms of assembly, homotetramer. It depends on FMNH2 as a cofactor.

The enzyme catalyses 5-O-(1-carboxyvinyl)-3-phosphoshikimate = chorismate + phosphate. It functions in the pathway metabolic intermediate biosynthesis; chorismate biosynthesis; chorismate from D-erythrose 4-phosphate and phosphoenolpyruvate: step 7/7. In terms of biological role, catalyzes the anti-1,4-elimination of the C-3 phosphate and the C-6 proR hydrogen from 5-enolpyruvylshikimate-3-phosphate (EPSP) to yield chorismate, which is the branch point compound that serves as the starting substrate for the three terminal pathways of aromatic amino acid biosynthesis. This reaction introduces a second double bond into the aromatic ring system. This is Chorismate synthase from Beutenbergia cavernae (strain ATCC BAA-8 / DSM 12333 / CCUG 43141 / JCM 11478 / NBRC 16432 / NCIMB 13614 / HKI 0122).